We begin with the raw amino-acid sequence, 357 residues long: Iron deficiency-induced protein A (357 aa).

The tat-type signal signal peptide spans 1–36 (MSESMFSRRDFLLGGTALAGTLLLDSFGDWRRRAEA). Positions 48, 49, 182, 238, and 239 each coordinate Fe cation.

The protein belongs to the bacterial solute-binding protein 1 family. In terms of processing, predicted to be exported by the Tat system. The position of the signal peptide cleavage has not been experimentally proven.

It is found in the cellular thylakoid membrane. Its function is as follows. Plays an important role in protecting the acceptor side of photosystem II (PSII) against oxidative damage, especially under iron-limiting growth conditions. Functionally, may also be part of a periplasmic ABC transporter complex involved in iron import. This Synechococcus elongatus (strain ATCC 33912 / PCC 7942 / FACHB-805) (Anacystis nidulans R2) protein is Iron deficiency-induced protein A (idiA).